A 1558-amino-acid polypeptide reads, in one-letter code: ABC transporter NFT1 (1558 aa).

The Extracellular portion of the chain corresponds to 1 to 29 (MIKNGTCPFWERDDLSECARREYIEFKFP). Asparagine 4 carries N-linked (GlcNAc...) asparagine glycosylation. A helical membrane pass occupies residues 30-50 (LFILLTGMIYAFCKVFRAFYL). The Cytoplasmic segment spans residues 51–103 (RRKNHTNEAPEFEEQGNGNHEYARFSVLRLKSAWESRSFCNVNNRSTFDKFKK). The helical transmembrane segment at 104–124 (FIEGAFIVLQLTIHLYILSNM) threads the bilayer. At 125–130 (PMDNKK) the chain is on the extracellular side. A helical transmembrane segment spans residues 131–151 (FFHQGFLVQMFLWILLLVVIT). The Cytoplasmic portion of the chain corresponds to 152 to 169 (LRLISASQSFRWVLACKR). Residues 170-190 (DLWAVSFYSYASLFTLSILPL) form a helical membrane-spanning segment. The Extracellular segment spans residues 191 to 201 (RSVFIGKIKDK). Residues 202–222 (IMVKYIISETFIDLALLLLLS) form a helical membrane-spanning segment. The Cytoplasmic segment spans residues 223-302 (TSSIEGTRYS…SSKKGRLLPN (80 aa)). A helical transmembrane segment spans residues 303 to 323 (IICYFKAVFISQLFLAFVSSF). Positions 311–621 (FISQLFLAFV…IASTVSLLIQ (311 aa)) constitute an ABC transmembrane type-1 1 domain. The Extracellular portion of the chain corresponds to 324–351 (LNFVPSLLMPRILSYVNDPKSQSWNLVS). The chain crosses the membrane as a helical span at residues 352-374 (LYVSSMLVSKIIATTCRGQGLFL). Residues 375–449 (GEKGTMQLRT…VMSIDAFKVS (75 aa)) are Cytoplasmic-facing. A disordered region spans residues 410–434 (NASTSFEENPDSSEAEPRKKSSRKD). Basic and acidic residues predominate over residues 424–434 (AEPRKKSSRKD). Residues 450 to 470 (EAMNTFYLACEAVFMTVTALM) form a helical membrane-spanning segment. At 471–481 (ILYSLLGWSAF) the chain is on the extracellular side. A helical transmembrane segment spans residues 482–504 (AGTFALLAMIPLNFWCATFYGNY). The Cytoplasmic segment spans residues 505–558 (QADQLILTDKRTSGISEALNSIRVIKLLAWENLFYQKIINVRDGEIRLLKKKAT). The chain crosses the membrane as a helical span at residues 559-579 (IFFLNHLIWFFGPTLVSAITF). Over 580 to 584 (SVFIK) the chain is Extracellular. Residues 585 to 605 (FQNQTLTPTIAFTALSLFAIL) traverse the membrane as a helical segment. The Cytoplasmic segment spans residues 606 to 953 (RTPMDQIAST…KFSAYKWLAD (348 aa)). Positions 651 to 892 (FGFEDASMEW…NEFLRESINN (242 aa)) constitute an ABC transporter 1 domain. Residue 686–693 (GPTGSGKS) coordinates ATP. Residues 892–901 (NDSKNTTHNQ) are compositionally biased toward polar residues. The segment at 892 to 926 (NDSKNTTHNQIDLKRSTTSKKTKNGDPEGENSQDE) is disordered. Residues 954-974 (YFGGLGVVFVFTSSAILIHGI) form a helical membrane-spanning segment. The ABC transmembrane type-1 2 domain maps to 961-1251 (VFVFTSSAIL…IIKVFSSVEL (291 aa)). The Extracellular segment spans residues 975–1013 (TLSQGFWLRYWLETGSSGSKSTWLYRIVEGHSNIYFILT). A helical transmembrane segment spans residues 1014–1034 (YIVIGFVSSFLTSGKVWIAII). The Cytoplasmic segment spans residues 1035–1082 (SGTNVTKKIFAKLLSSILYAKLRFHNVTPTGRIMNRFSKDMDIIDQQL). A helical membrane pass occupies residues 1083–1105 (IPNFEGLSYSVVVCLWIILLIGY). The Extracellular portion of the chain corresponds to 1106 to 1109 (VTPQ). The helical transmembrane segment at 1110–1132 (FLLFAIPLCALYYTVCTLYLRAS) threads the bilayer. The Cytoplasmic segment spans residues 1133 to 1199 (RELKRIDNIN…ATEWITYRVD (67 aa)). Residues 1200 to 1220 (IIGTLVLFSSSVMIIMKASYL) form a helical membrane-spanning segment. Topologically, residues 1221–1222 (DA) are extracellular. The helical transmembrane segment at 1223-1243 (GLAGILLSNAFSFTETAQWII) threads the bilayer. Over 1244–1558 (KVFSSVELLM…LAKVSFDNKR (315 aa)) the chain is Cytoplasmic. The region spanning 1285–1538 (VELKNLSLRY…RNTIFYRLCR (254 aa)) is the ABC transporter 2 domain. 1319 to 1326 (GRTGAGKS) lines the ATP pocket.

It belongs to the ABC transporter superfamily. ABCC family. Conjugate transporter (TC 3.A.1.208) subfamily.

It localises to the membrane. The sequence is that of ABC transporter NFT1 (NFT1) from Saccharomyces cerevisiae (strain YJM789) (Baker's yeast).